Consider the following 95-residue polypeptide: DNA-directed RNA polymerase subunit Rpo11 (95 aa).

It belongs to the archaeal Rpo11/eukaryotic RPB11/RPC19 RNA polymerase subunit family. Part of the RNA polymerase complex.

The protein localises to the cytoplasm. The catalysed reaction is RNA(n) + a ribonucleoside 5'-triphosphate = RNA(n+1) + diphosphate. Its function is as follows. DNA-dependent RNA polymerase (RNAP) catalyzes the transcription of DNA into RNA using the four ribonucleoside triphosphates as substrates. This Thermococcus onnurineus (strain NA1) protein is DNA-directed RNA polymerase subunit Rpo11.